Here is a 126-residue protein sequence, read N- to C-terminus: SOSS complex subunit C homolog (126 aa).

Residues 106–126 are disordered; the sequence is LEPLPSPATTPTAPPSHSISK. The segment covering 107–119 has biased composition (pro residues); sequence EPLPSPATTPTAP.

The protein belongs to the SOSS-C family.

This Drosophila sechellia (Fruit fly) protein is SOSS complex subunit C homolog.